The following is a 349-amino-acid chain: Alanine racemase (349 aa).

The active-site Proton acceptor; specific for D-alanine is Lys35. Lys35 is subject to N6-(pyridoxal phosphate)lysine. Arg130 serves as a coordination point for substrate. Tyr244 serves as the catalytic Proton acceptor; specific for L-alanine. Residue Met292 coordinates substrate.

Belongs to the alanine racemase family. Pyridoxal 5'-phosphate serves as cofactor.

It carries out the reaction L-alanine = D-alanine. The protein operates within amino-acid biosynthesis; D-alanine biosynthesis; D-alanine from L-alanine: step 1/1. In terms of biological role, catalyzes the interconversion of L-alanine and D-alanine. May also act on other amino acids. This Dinoroseobacter shibae (strain DSM 16493 / NCIMB 14021 / DFL 12) protein is Alanine racemase (alr).